A 426-amino-acid polypeptide reads, in one-letter code: Histidine--tRNA ligase (426 aa).

Belongs to the class-II aminoacyl-tRNA synthetase family. In terms of assembly, homodimer.

The protein localises to the cytoplasm. It carries out the reaction tRNA(His) + L-histidine + ATP = L-histidyl-tRNA(His) + AMP + diphosphate + H(+). The sequence is that of Histidine--tRNA ligase from Microcystis aeruginosa (strain NIES-843 / IAM M-2473).